A 1073-amino-acid chain; its full sequence is Probable cellulose synthase A catalytic subunit 2 [UDP-forming] (1073 aa).

The Cytoplasmic portion of the chain corresponds to 1–270 (MDGAKSGKQC…SSSRINPYRM (270 aa)). Positions 13, 16, 32, 35, 40, 43, 55, and 58 each coordinate Zn(2+). The RING-type; degenerate zinc finger occupies 13-59 (CQICGDGVGTAADGELFTACDVCGFPVCRPCYEYERKDGSQACPQCK). The tract at residues 66 to 98 (KGSPPILGDESDDVDADDASDVNYPTSGNQDHK) is disordered. Positions 74–85 (DESDDVDADDAS) are enriched in acidic residues. The chain crosses the membrane as a helical span at residues 271–291 (VIVLRLIVLCIFLHYRITNPV). Residues 292–293 (RN) are Extracellular-facing. The helical transmembrane segment at 294–314 (AYPLWLLSVICEIWFALSWIL) threads the bilayer. Over 315–856 (DQFPKWSPIN…INTTIYPLTS (542 aa)) the chain is Cytoplasmic. UDP-alpha-D-glucose-binding residues include S353, K359, E360, and D389. Residue D389 is part of the active site. Positions 443-470 (VKDRRAMKREYEEFKVRVNALVAKAQKV) form a coiled coil. Residue K530 participates in UDP-alpha-D-glucose binding. The Mn(2+) site is built by K531 and D555. The segment at 655 to 676 (GGRKKTKKSKEKSTEKKKSHKH) is disordered. Residue D773 is part of the active site. Residues 857–877 (IPLLLYCILPAICLLTGKFII) form a helical membrane-spanning segment. At 878-882 (PEISN) the chain is on the extracellular side. A helical transmembrane segment spans residues 883 to 903 (FASIWFISLFLSIFATGILEM). At 904–918 (RWSGVGIDEWWRNEQ) the chain is on the cytoplasmic side. A helical transmembrane segment spans residues 919–939 (FWVIGGISAHLFAVFQGLLKV). Topologically, residues 940–969 (LAGIDTSFTVTSKASDEEGDFAELYMFKWT) are extracellular. A helical transmembrane segment spans residues 970-990 (TLLIPPTTILIINLVGVVAGI). Residues 991–1001 (SYAINSGYQSW) lie on the Cytoplasmic side of the membrane. The helical transmembrane segment at 1002–1022 (GPLFGKLFFAFWVIVHLYPFL) threads the bilayer. At 1023-1031 (KGLMGRQNR) the chain is on the extracellular side. Residues 1032–1052 (TPTIVVVWAILLASIFSLLWV) traverse the membrane as a helical segment. Residues 1053–1073 (RIDPFTTRVTGPDTQKCGINC) are Cytoplasmic-facing.

It belongs to the glycosyltransferase 2 family. Plant cellulose synthase subfamily. The cofactor is Mn(2+). Zn(2+) serves as cofactor.

It is found in the cell membrane. It carries out the reaction [(1-&gt;4)-beta-D-glucosyl](n) + UDP-alpha-D-glucose = [(1-&gt;4)-beta-D-glucosyl](n+1) + UDP + H(+). The protein operates within glycan metabolism; plant cellulose biosynthesis. Functionally, probable catalytic subunit of cellulose synthase terminal complexes ('rosettes'), required for beta-1,4-glucan microfibril crystallization, a major mechanism of the cell wall formation. The polypeptide is Probable cellulose synthase A catalytic subunit 2 [UDP-forming] (CESA2) (Oryza sativa subsp. japonica (Rice)).